Here is a 634-residue protein sequence, read N- to C-terminus: 3-dehydroshikimate dehydratase (634 aa).

A divalent metal cation contacts are provided by Glu-134, Asp-165, Gln-191, and Glu-239. 2 consecutive VOC domains span residues 295–414 and 440–590; these read GIEF…LVER and RVDH…VFTE. Mg(2+)-binding residues include His-443, His-521, and Glu-599.

This sequence belongs to the bacterial two-domain DSD family. As to quaternary structure, homodimer. Co(2+) is required as a cofactor. Requires Ni(2+) as cofactor. It depends on Mg(2+) as a cofactor. Mn(2+) serves as cofactor.

It carries out the reaction 3-dehydroshikimate = 3,4-dihydroxybenzoate + H2O. It functions in the pathway aromatic compound metabolism; 3,4-dihydroxybenzoate biosynthesis. In terms of biological role, catalyzes the conversion of 3-dehydroshikimate to protocatechuate (3,4-dihydroxybenzoate), a common intermediate of quinate and shikimate degradation pathways. Is required for growth on either quinate or shikimate as a sole carbon source. This is 3-dehydroshikimate dehydratase from Pseudomonas aeruginosa (strain ATCC 15692 / DSM 22644 / CIP 104116 / JCM 14847 / LMG 12228 / 1C / PRS 101 / PAO1).